Consider the following 325-residue polypeptide: MQTLTQHLTSQAVNDSLSHLILTLADTSKAISHAVRHGALAGVLGATEQENVQGETQKKLDIITNDMLKDALKADGTVRGLASEEEDHVVEVRQNGQYLVCFDPLDGSSNIDINSLVGTIFSILPAPAGELTETSFLQSGRAQLAAGYVLYGPSTMLALTTGQGVQLFTLDPETNEFLLTNAAMSISPETQEFAINMSNQRFWEAPMQTYIADLLLGKIGPREKSFNMRWIAAMVGDVHRVLSRGGIFTYPSDNKDPKKPYKLRLMYEANPMAFLVEQAGGKASTGYETILDITPTHIHQRVAVILGSANEVDACLSYHGIDSHK.

Mg(2+)-binding residues include E84, D103, L105, and D106. Substrate is bound by residues 106 to 109, N196, and K262; that span reads DGSS. E268 is a Mg(2+) binding site.

This sequence belongs to the FBPase class 1 family. As to quaternary structure, homotetramer. The cofactor is Mg(2+).

Its subcellular location is the cytoplasm. It catalyses the reaction beta-D-fructose 1,6-bisphosphate + H2O = beta-D-fructose 6-phosphate + phosphate. The protein operates within carbohydrate biosynthesis; gluconeogenesis. The chain is Fructose-1,6-bisphosphatase class 1 from Shewanella baltica (strain OS195).